Here is a 137-residue protein sequence, read N- to C-terminus: Large-conductance mechanosensitive channel (137 aa).

2 helical membrane passes run 10-30 (FAMRGNVVDLAVGVIIGAAFG) and 76-96 (GVFIQNVFDFLIVAFAIFMAI).

It belongs to the MscL family. Homopentamer.

It localises to the cell inner membrane. Its function is as follows. Channel that opens in response to stretch forces in the membrane lipid bilayer. May participate in the regulation of osmotic pressure changes within the cell. The protein is Large-conductance mechanosensitive channel of Escherichia coli O45:K1 (strain S88 / ExPEC).